Reading from the N-terminus, the 334-residue chain is Holliday junction branch migration complex subunit RuvB (334 aa).

The interval 4–184 is large ATPase domain (RuvB-L); that stretch reads ADRLISAAVI…FGIVQRLEFY (181 aa). ATP is bound by residues isoleucine 23, arginine 24, glycine 65, lysine 68, threonine 69, threonine 70, 131–133, arginine 174, tyrosine 184, and arginine 221; that span reads EDY. Threonine 69 contributes to the Mg(2+) binding site. A small ATPAse domain (RuvB-S) region spans residues 185–255; sequence QVADLEHIVS…VAMKALDMLN (71 aa). The segment at 258–334 is head domain (RuvB-H); sequence AEGFDFMDRK…YKHFGITREE (77 aa). DNA contacts are provided by arginine 294, arginine 313, and arginine 318.

It belongs to the RuvB family. As to quaternary structure, homohexamer. Forms an RuvA(8)-RuvB(12)-Holliday junction (HJ) complex. HJ DNA is sandwiched between 2 RuvA tetramers; dsDNA enters through RuvA and exits via RuvB. An RuvB hexamer assembles on each DNA strand where it exits the tetramer. Each RuvB hexamer is contacted by two RuvA subunits (via domain III) on 2 adjacent RuvB subunits; this complex drives branch migration. In the full resolvosome a probable DNA-RuvA(4)-RuvB(12)-RuvC(2) complex forms which resolves the HJ.

The protein resides in the cytoplasm. It carries out the reaction ATP + H2O = ADP + phosphate + H(+). Functionally, the RuvA-RuvB-RuvC complex processes Holliday junction (HJ) DNA during genetic recombination and DNA repair, while the RuvA-RuvB complex plays an important role in the rescue of blocked DNA replication forks via replication fork reversal (RFR). RuvA specifically binds to HJ cruciform DNA, conferring on it an open structure. The RuvB hexamer acts as an ATP-dependent pump, pulling dsDNA into and through the RuvAB complex. RuvB forms 2 homohexamers on either side of HJ DNA bound by 1 or 2 RuvA tetramers; 4 subunits per hexamer contact DNA at a time. Coordinated motions by a converter formed by DNA-disengaged RuvB subunits stimulates ATP hydrolysis and nucleotide exchange. Immobilization of the converter enables RuvB to convert the ATP-contained energy into a lever motion, pulling 2 nucleotides of DNA out of the RuvA tetramer per ATP hydrolyzed, thus driving DNA branch migration. The RuvB motors rotate together with the DNA substrate, which together with the progressing nucleotide cycle form the mechanistic basis for DNA recombination by continuous HJ branch migration. Branch migration allows RuvC to scan DNA until it finds its consensus sequence, where it cleaves and resolves cruciform DNA. The sequence is that of Holliday junction branch migration complex subunit RuvB from Yersinia pseudotuberculosis serotype O:1b (strain IP 31758).